We begin with the raw amino-acid sequence, 175 residues long: Phosphopantetheine adenylyltransferase (175 aa).

Serine 10 lines the substrate pocket. Residues 10–11 (SF) and histidine 18 contribute to the ATP site. The substrate site is built by lysine 42, leucine 74, and arginine 88. ATP-binding positions include 89-91 (GMR), glutamate 99, and 124-130 (WIFTSSS).

This sequence belongs to the bacterial CoaD family. As to quaternary structure, homohexamer. Mg(2+) is required as a cofactor.

The protein localises to the cytoplasm. It carries out the reaction (R)-4'-phosphopantetheine + ATP + H(+) = 3'-dephospho-CoA + diphosphate. Its pathway is cofactor biosynthesis; coenzyme A biosynthesis; CoA from (R)-pantothenate: step 4/5. Functionally, reversibly transfers an adenylyl group from ATP to 4'-phosphopantetheine, yielding dephospho-CoA (dPCoA) and pyrophosphate. This Desulfatibacillum aliphaticivorans protein is Phosphopantetheine adenylyltransferase.